Reading from the N-terminus, the 279-residue chain is Thymidylate synthase (279 aa).

132–133 provides a ligand contact to dUMP; sequence RR. Cys-153 (nucleophile) is an active-site residue. Residues 178–181, Asn-189, and 219–221 contribute to the dUMP site; these read RSND and HIY. Asp-181 lines the (6R)-5,10-methylene-5,6,7,8-tetrahydrofolate pocket. Ala-278 contacts (6R)-5,10-methylene-5,6,7,8-tetrahydrofolate.

The protein belongs to the thymidylate synthase family. Bacterial-type ThyA subfamily. Homodimer.

It is found in the cytoplasm. It catalyses the reaction dUMP + (6R)-5,10-methylene-5,6,7,8-tetrahydrofolate = 7,8-dihydrofolate + dTMP. The protein operates within pyrimidine metabolism; dTTP biosynthesis. In terms of biological role, catalyzes the reductive methylation of 2'-deoxyuridine-5'-monophosphate (dUMP) to 2'-deoxythymidine-5'-monophosphate (dTMP) while utilizing 5,10-methylenetetrahydrofolate (mTHF) as the methyl donor and reductant in the reaction, yielding dihydrofolate (DHF) as a by-product. This enzymatic reaction provides an intracellular de novo source of dTMP, an essential precursor for DNA biosynthesis. The sequence is that of Thymidylate synthase from Lactococcus lactis subsp. cremoris (strain SK11).